Consider the following 734-residue polypeptide: MPGKLLWGDIMELEAPLEESESQRKERQKSDRRKSRHHSESEERTETRENGVTDDLDAPKPKKAKMREKLNGDTKEGLRFSDEFSPSHKSRRKDLPNGDVDEYEKRSKRVSSSENSHKSSDKAEETLTREQKEGAFSNFSISEETIKLLKGRGVTYLFPIQVKTFGPVYEGKDLIAQARTGTGKTFSFAIPLIERLQRNQETIKKSRSPKVLVLAPTRELANQVAKDFKDITRKLSVACFYGGTSYQSQINQIRNGIDILVGTPGRIKDHLQSGRLDLSKLRHVVLDEVDQMLDLGFAEQVEDIIHESYKTDSEDNPQTLLFSATCPQWVYKVAKKYMKSRYEQVDLVGKMTQKAATTVEHLAIQCHWSQRPAVIGDVLQVYSGSEGRAIIFCETKKNVTEMAMNPHIKQNAQCLHGDIAQSQREITLKGFREGSFKVLVATNVAARGLDIPEVDLVIQSSPPQDVESYIHRSGRTGRAGRTGICVCFYQPRERGQLRYVEQKAGITFKRVGVPSTMDLVKSKSMDAIRSLASVSYAAVDFFRPSAQRLIEEKGAVDALAAALAHISGASSFEPRSLITSDKGFVTMTLESPEEIQDVSCAWKELNRKLSSNAVSHVTRMCLLKGNMGVCFDVPTSESERLQAEWHDSDWILSVPAKLPEIEEYYDGNTSSNPRQRSGWSGGRSGRSGRSGGRSGGRSGRQSRQGSRSGSRQDGRRRSGNRNRSRSGGHKRNFD.

The disordered stretch occupies residues 1–131 (MPGKLLWGDI…KAEETLTREQ (131 aa)). Residues 11 to 20 (MELEAPLEES) are compositionally biased toward acidic residues. Basic and acidic residues-rich tracts occupy residues 38-51 (HSES…RENG) and 67-86 (REKL…EFSP). A phosphoserine mark is found at Ser-41, Ser-81, Ser-85, Ser-113, Ser-119, and Ser-120. Basic and acidic residues predominate over residues 115–131 (NSHKSSDKAEETLTREQ). Residue Lys-122 forms a Glycyl lysine isopeptide (Lys-Gly) (interchain with G-Cter in SUMO2) linkage. Residues 134 to 162 (GAFSNFSISEETIKLLKGRGVTYLFPIQV) carry the Q motif motif. The Helicase ATP-binding domain occupies 165-344 (FGPVYEGKDL…KKYMKSRYEQ (180 aa)). Position 178–185 (178–185 (ARTGTGKT)) interacts with ATP. At Thr-244 the chain carries Phosphothreonine. A DEVD box motif is present at residues 287–290 (DEVD). The region spanning 377-521 (DVLQVYSGSE…GVPSTMDLVK (145 aa)) is the Helicase C-terminal domain. Phosphoserine is present on Ser-515. A disordered region spans residues 664–734 (YYDGNTSSNP…RSGGHKRNFD (71 aa)). The segment covering 679 to 698 (WSGGRSGRSGRSGGRSGGRS) has biased composition (gly residues). Residues 699-709 (GRQSRQGSRSG) show a composition bias toward low complexity. The span at 717-734 (RSGNRNRSRSGGHKRNFD) shows a compositional bias: basic residues.

Belongs to the DEAD box helicase family. DDX21/DDX50 subfamily. As to quaternary structure, interacts with C1QBP. Interacts with the ubiquitin ligase CTLH complex through GID4. Interacts with TICAM1.

It is found in the nucleus. The protein resides in the nucleolus. Its subcellular location is the cytoplasm. It carries out the reaction ATP + H2O = ADP + phosphate + H(+). Its function is as follows. ATP-dependent RNA helicase that may play a role in various aspects of RNA metabolism including pre-mRNA splicing or ribosomal RNA production. Also acts as a viral restriction factor and promotes the activation of the NF-kappa-B and IRF3 signaling pathways following its stimulation with viral RNA or infection with RNA and DNA viruses. For instance, decreases vaccinia virus, herpes simplex virus, Zika virus or dengue virus replication during the early stage of infection. Mechanistically, acts via the adapter TICAM1 and independently of the DDX1-DDX21-DHX36 helicase complex to induce the production of interferon-beta. This is ATP-dependent RNA helicase DDX50 (Ddx50) from Mus musculus (Mouse).